The following is a 525-amino-acid chain: Ribosomal protein uS12 methylthiotransferase RimO (525 aa).

A compositionally biased stretch (polar residues) spans 1-20; that stretch reads MPKISTESVNTTIAPSQPAS. The tract at residues 1 to 44 is disordered; the sequence is MPKISTESVNTTIAPSQPASTAPKDTATLFNPAKPTATPAQSSI. The 111-residue stretch at 82–192 folds into the MTTase N-terminal domain; that stretch reads PKIGFVSLGC…VIRAVALHVP (111 aa). Residues C91, C127, C156, C230, C234, and C237 each contribute to the [4Fe-4S] cluster site. The Radical SAM core domain occupies 216–453; the sequence is LTPSHYAYLK…MTLQQDISAQ (238 aa). The 70-residue stretch at 456 to 525 folds into the TRAM domain; it reads QEKIGKTLMV…EYDLFASYQA (70 aa).

It belongs to the methylthiotransferase family. RimO subfamily. The cofactor is [4Fe-4S] cluster.

The protein localises to the cytoplasm. The enzyme catalyses L-aspartate(89)-[ribosomal protein uS12]-hydrogen + (sulfur carrier)-SH + AH2 + 2 S-adenosyl-L-methionine = 3-methylsulfanyl-L-aspartate(89)-[ribosomal protein uS12]-hydrogen + (sulfur carrier)-H + 5'-deoxyadenosine + L-methionine + A + S-adenosyl-L-homocysteine + 2 H(+). Catalyzes the methylthiolation of an aspartic acid residue of ribosomal protein uS12. In Psychrobacter arcticus (strain DSM 17307 / VKM B-2377 / 273-4), this protein is Ribosomal protein uS12 methylthiotransferase RimO.